Consider the following 206-residue polypeptide: Two-component response regulator ARR7 (206 aa).

A Response regulatory domain is found at 25 to 152; the sequence is HVLAVDDSIV…DVKRIKQLIM (128 aa). Asp85 carries the 4-aspartylphosphate modification. The interval 165 to 206 is disordered; that stretch reads SNKRKLQEDSDTSSSSHDDTSIKDSSCSKRMKSESENLFSLL.

Belongs to the ARR family. Type-A subfamily. In terms of processing, two-component system major event consists of a His-to-Asp phosphorelay between a sensor histidine kinase (HK) and a response regulator (RR). In plants, the His-to-Asp phosphorelay involves an additional intermediate named Histidine-containing phosphotransfer protein (HPt). This multistep phosphorelay consists of a His-Asp-His-Asp sequential transfer of a phosphate group between first a His and an Asp of the HK protein, followed by the transfer to a conserved His of the HPt protein and finally the transfer to an Asp in the receiver domain of the RR protein. In terms of tissue distribution, predominantly expressed in roots and young flowers.

It is found in the nucleus. In terms of biological role, functions as a response regulator involved in His-to-Asp phosphorelay signal transduction system. Phosphorylation of the Asp residue in the receiver domain activates the ability of the protein to promote the transcription of target genes. Type-A response regulators seem to act as negative regulators of the cytokinin signaling. This Arabidopsis thaliana (Mouse-ear cress) protein is Two-component response regulator ARR7 (ARR7).